A 408-amino-acid chain; its full sequence is 1-deoxy-D-xylulose 5-phosphate reductoisomerase (408 aa).

7 residues coordinate NADPH: T19, G20, S21, I22, G45, N47, and N130. Residue K131 coordinates 1-deoxy-D-xylulose 5-phosphate. E132 provides a ligand contact to NADPH. Residue D156 coordinates Mn(2+). 1-deoxy-D-xylulose 5-phosphate is bound by residues S157, E158, S182, and H205. E158 contributes to the Mn(2+) binding site. G211 lines the NADPH pocket. 1-deoxy-D-xylulose 5-phosphate-binding residues include S218, N223, K224, and E227. E227 provides a ligand contact to Mn(2+).

This sequence belongs to the DXR family. Mg(2+) is required as a cofactor. It depends on Mn(2+) as a cofactor.

It catalyses the reaction 2-C-methyl-D-erythritol 4-phosphate + NADP(+) = 1-deoxy-D-xylulose 5-phosphate + NADPH + H(+). It participates in isoprenoid biosynthesis; isopentenyl diphosphate biosynthesis via DXP pathway; isopentenyl diphosphate from 1-deoxy-D-xylulose 5-phosphate: step 1/6. In terms of biological role, catalyzes the NADPH-dependent rearrangement and reduction of 1-deoxy-D-xylulose-5-phosphate (DXP) to 2-C-methyl-D-erythritol 4-phosphate (MEP). This is 1-deoxy-D-xylulose 5-phosphate reductoisomerase from Gluconobacter oxydans (strain 621H) (Gluconobacter suboxydans).